Here is a 714-residue protein sequence, read N- to C-terminus: Phenylalanine 2-monooxygenase precursor (714 aa).

Positions 1–15 (MGVTVIPRLLGLKDE) are cleaved as a propeptide — removed in mature form; occupies the channel of the substrate amino acid from the outside of the protein to the interior flavin ring in the precursor. FAD contacts are provided by residues Gly-2, Gly-68, and 95 to 96 (EA). A propeptide spans 108–109 (IK) (linker peptide). FAD-binding positions include Arg-120, 141 to 144 (GAMR), and Val-375. Arg-144 provides a ligand contact to substrate. A substrate-binding site is contributed by Tyr-537. FAD-binding positions include 652-653 (SD) and 660-662 (GWL). Gly-660 is a binding site for substrate.

This sequence belongs to the phenylalanine 2-monooxygenase family. As to quaternary structure, heterotetramer composed of 2 alpha and 2 beta subunits. It depends on FAD as a cofactor. Post-translationally, proteolytically cleaved to yield the active enzyme. Cleavage of the linkage between the 2 subunits causes reshaping of the oxygen channel and the hydrophobic environment around the flavin ring. Removal of the prosequence causes opening of the amino acid channel.

It carries out the reaction L-phenylalanine + O2 = 2-phenylacetamide + CO2 + H2O. Catalyzes both oxygenative decarboxylation and oxidative deamination, depending on the substrate used. Has high activity for L-Phe and L-Tyr, but relatively low activities for L-Met and L-Trp. L-Phe is mainly oxygenated and L-Met is mainly oxidized. This is Phenylalanine 2-monooxygenase precursor from Pseudomonas sp.